Consider the following 914-residue polypeptide: Polyribonucleotide nucleotidyltransferase (914 aa).

The disordered stretch occupies residues 407–427 (YMHNYEMPPYSTGETGRVGSP). 2 residues coordinate Mg(2+): Asp521 and Asp527. The region spanning 587 to 646 (PRIITTSVPVEKIGEVIGPKGKMINQIQEDTGAEIAIEDDGTVFISSEGGEAAKKAKSII) is the KH domain. The region spanning 658 to 730 (GETYNGKVVK…DRGKISLAIP (73 aa)) is the S1 motif domain. Positions 727-914 (LAIPGFEDQE…VRRDFDPFED (188 aa)) are disordered. 3 stretches are compositionally biased toward basic and acidic residues: residues 742–789 (SRGD…RRSD), 797–865 (DRPR…DRRG), and 873–899 (RGSD…ERTE).

The protein belongs to the polyribonucleotide nucleotidyltransferase family. Mg(2+) is required as a cofactor.

It is found in the cytoplasm. It carries out the reaction RNA(n+1) + phosphate = RNA(n) + a ribonucleoside 5'-diphosphate. In terms of biological role, involved in mRNA degradation. Catalyzes the phosphorolysis of single-stranded polyribonucleotides processively in the 3'- to 5'-direction. In Bifidobacterium longum subsp. infantis (strain ATCC 15697 / DSM 20088 / JCM 1222 / NCTC 11817 / S12), this protein is Polyribonucleotide nucleotidyltransferase.